We begin with the raw amino-acid sequence, 324 residues long: Acetyl-coenzyme A carboxylase carboxyl transferase subunit alpha (324 aa).

Residues 37-291 form the CoA carboxyltransferase C-terminal domain; the sequence is KLERRLDKLK…RDFILREWLR (255 aa).

Belongs to the AccA family. In terms of assembly, acetyl-CoA carboxylase is a heterohexamer composed of biotin carboxyl carrier protein (AccB), biotin carboxylase (AccC) and two subunits each of ACCase subunit alpha (AccA) and ACCase subunit beta (AccD).

The protein resides in the cytoplasm. It carries out the reaction N(6)-carboxybiotinyl-L-lysyl-[protein] + acetyl-CoA = N(6)-biotinyl-L-lysyl-[protein] + malonyl-CoA. It participates in lipid metabolism; malonyl-CoA biosynthesis; malonyl-CoA from acetyl-CoA: step 1/1. Functionally, component of the acetyl coenzyme A carboxylase (ACC) complex. First, biotin carboxylase catalyzes the carboxylation of biotin on its carrier protein (BCCP) and then the CO(2) group is transferred by the carboxyltransferase to acetyl-CoA to form malonyl-CoA. In Chlamydia abortus (strain DSM 27085 / S26/3) (Chlamydophila abortus), this protein is Acetyl-coenzyme A carboxylase carboxyl transferase subunit alpha.